The following is a 547-amino-acid chain: MAAKEVRFGDSARQAVISGVNVLADAVKVTLGPKGRNVVLERSYGAPTITKDGVSVAKEIELKDKFENMGAQMVKEVASKTSDTAGDGTTTATVLAQSIVKEGMRYVAAGMNPMDLKRGIEKAVTGAVEELKKLSKPCSTSKEIAQVGSISANSDTEIGRIIAEAMDKVGKEGVITVEDGSGLENELDVVEGMQFDRGYLSPYFVSSADKQIAALESPFVLLHDKKISNIRDLLPVLEQVAKAGKPLLIIAEDVDGEALATLVVNNIRGILKTCAVKAPGFGDRRKAMLEDIAILTGGTVIAEEVGLSLEKTRLEDLGQAKRIEVGKENTTIIDGAGDVKTIEARVAQIRKQIEEASSDYDREKLQERVAKLAGGVALIKVGAATEVEMKEKKARVEDALHATRAAVEEGIVPGGGVALLRTINAVSKIKGDNHDQDSGIKIVLRAMEEPLRQIVTNCGDEASVVVNKVKEGQGTFGYNAATGEYGDLVAMGVLDPTKVTRSALQNAASVAGLILTTDAMVAELPKEDSPGAGAGMGGMGGMGGMDM.

Residues 30–33 (TLGP), lysine 51, 87–91 (DGTTT), glycine 415, 479–481 (NAA), and aspartate 495 contribute to the ATP site. The disordered stretch occupies residues 525–547 (PKEDSPGAGAGMGGMGGMGGMDM). Residues 532-547 (AGAGMGGMGGMGGMDM) are compositionally biased toward gly residues.

The protein belongs to the chaperonin (HSP60) family. In terms of assembly, forms a cylinder of 14 subunits composed of two heptameric rings stacked back-to-back. Interacts with the co-chaperonin GroES.

The protein resides in the cytoplasm. The enzyme catalyses ATP + H2O + a folded polypeptide = ADP + phosphate + an unfolded polypeptide.. Together with its co-chaperonin GroES, plays an essential role in assisting protein folding. The GroEL-GroES system forms a nano-cage that allows encapsulation of the non-native substrate proteins and provides a physical environment optimized to promote and accelerate protein folding. The chain is Chaperonin GroEL from Nitrosomonas europaea (strain ATCC 19718 / CIP 103999 / KCTC 2705 / NBRC 14298).